Reading from the N-terminus, the 352-residue chain is Ion-translocating oxidoreductase complex subunit D (352 aa).

4 helical membrane passes run 20-40, 44-64, 78-109, and 123-143; these read IMLL…WFFG, LFQI…VLSL, ALLT…IIIA, and PAMI…TSWL. Thr-187 bears the FMN phosphoryl threonine mark. The next 5 membrane-spanning stretches (helical) occupy residues 214-234, 242-262, 267-287, 301-321, and 322-342; these read VLAG…GVFL, WHIP…GWLF, LASP…FFIL, LIFG…GGYP, and DGVA…DYYT.

Belongs to the NqrB/RnfD family. As to quaternary structure, the complex is composed of six subunits: RsxA, RsxB, RsxC, RsxD, RsxE and RsxG. FMN serves as cofactor.

The protein localises to the cell inner membrane. In terms of biological role, part of a membrane-bound complex that couples electron transfer with translocation of ions across the membrane. Required to maintain the reduced state of SoxR. This is Ion-translocating oxidoreductase complex subunit D from Salmonella arizonae (strain ATCC BAA-731 / CDC346-86 / RSK2980).